Consider the following 1097-residue polypeptide: Kinesin-like protein KIF1C (1097 aa).

In terms of domain architecture, Kinesin motor spans 5–347 (SVKVAVRVRP…LRYADRTKQI (343 aa)). Position 96–103 (96–103 (GQTGAGKS)) interacts with ATP. At Ser294 the chain carries Phosphoserine. Residues 358-380 (NARLIRELQEEVARLRELLMAQG) are a coiled coil. The interval 397–434 (GGVLPAASSPPAPASPSSPPPHNGELEPSFSPSAEPQI) is disordered. Positions 404–418 (SSPPAPASPSSPPPH) are enriched in pro residues. Residues 437 to 478 (EEAMERLQETEKIIAELNETWEEKLRKTEALRMEREALLAEM) are a coiled coil. Ser491 is subject to Phosphoserine. Positions 520-587 (TRVGQVDVDI…LKSGNRIVMG (68 aa)) constitute an FHA domain. Positions 630 to 671 (EQQGIDIKLEMEKRLQDLENQYRKEKEEADLLLEQQRLYADS) form a coiled coil. A phosphoserine mark is found at Ser671 and Ser673. Residues 824 to 868 (AEVEDLRAHIDKLTGILQEVKLQNSSKDRELQALRDRMLRMERVI) adopt a coiled-coil conformation. Disordered stretches follow at residues 897 to 921 (EAVSNDHSPAVRPSSPPQSSWERVS) and 946 to 1097 (QGLQ…GAAV). Ser911 is subject to Phosphoserine. Gly residues predominate over residues 949-958 (QGSGGRGGGL). The span at 997–1015 (GPQPPEEVTAPPPPPNRRP) shows a compositional bias: pro residues. Residues 1016 to 1026 (PSPRRPHRPRR) show a composition bias toward basic residues. A Phosphoserine modification is found at Ser1028. Arg1036 bears the Omega-N-methylarginine mark. Positions 1059 to 1077 (QPQPYPAQRPGPRYPPYTT) are enriched in pro residues. Thr1077 is modified (phosphothreonine). A Phosphoserine modification is found at Ser1086. The span at 1086 to 1097 (SAPDLKESGAAV) shows a compositional bias: basic and acidic residues.

Belongs to the TRAFAC class myosin-kinesin ATPase superfamily. Kinesin family. Unc-104 subfamily.

It localises to the cytoplasm. The protein resides in the cytoskeleton. Functionally, probable motor protein. The chain is Kinesin-like protein KIF1C (Kif1c) from Rattus norvegicus (Rat).